Reading from the N-terminus, the 64-residue chain is Protein sigN173 (64 aa).

This is Protein sigN173 from Dictyostelium discoideum (Social amoeba).